The primary structure comprises 671 residues: Acetyl-coenzyme A synthetase 2 (671 aa).

Residues 207–210 (RGGR) and Thr326 contribute to the CoA site. ATP is bound by residues 402–404 (GEP), 426–431 (DTYWQT), Asp517, and Arg532. Ser540 contacts CoA. Residue Arg543 participates in ATP binding. Arg603 is a binding site for CoA.

This sequence belongs to the ATP-dependent AMP-binding enzyme family.

The catalysed reaction is acetate + ATP + CoA = acetyl-CoA + AMP + diphosphate. The chain is Acetyl-coenzyme A synthetase 2 (ACS2) from Candida albicans (strain SC5314 / ATCC MYA-2876) (Yeast).